Consider the following 77-residue polypeptide: NAD(P)H-quinone oxidoreductase subunit L (77 aa).

2 helical membrane-spanning segments follow: residues 10-30 (LLIA…LPAG) and 48-68 (LVMY…SPFL).

The protein belongs to the complex I NdhL subunit family. NDH-1 can be composed of about 15 different subunits; different subcomplexes with different compositions have been identified which probably have different functions.

The protein localises to the cellular thylakoid membrane. It carries out the reaction a plastoquinone + NADH + (n+1) H(+)(in) = a plastoquinol + NAD(+) + n H(+)(out). It catalyses the reaction a plastoquinone + NADPH + (n+1) H(+)(in) = a plastoquinol + NADP(+) + n H(+)(out). Its function is as follows. NDH-1 shuttles electrons from an unknown electron donor, via FMN and iron-sulfur (Fe-S) centers, to quinones in the respiratory and/or the photosynthetic chain. The immediate electron acceptor for the enzyme in this species is believed to be plastoquinone. Couples the redox reaction to proton translocation, and thus conserves the redox energy in a proton gradient. Cyanobacterial NDH-1 also plays a role in inorganic carbon-concentration. This chain is NAD(P)H-quinone oxidoreductase subunit L, found in Picosynechococcus sp. (strain ATCC 27264 / PCC 7002 / PR-6) (Agmenellum quadruplicatum).